The primary structure comprises 131 residues: Class I hydrophobin 9 (131 aa).

The signal sequence occupies residues 1-23 (MFARRAISIFAFMLVALSIFAAA). Disulfide bonds link Cys52–Cys112, Cys59–Cys106, Cys60–Cys93, and Cys113–Cys126. A glycan (N-linked (GlcNAc...) asparagine) is linked at Asn53. N-linked (GlcNAc...) asparagine glycosylation occurs at Asn115.

It belongs to the fungal hydrophobin family. In terms of assembly, self-assembles to form functional amyloid fibrils called rodlets. Self-assembly into fibrillar rodlets occurs spontaneously at hydrophobic:hydrophilic interfaces and the rodlets further associate laterally to form amphipathic monolayers.

It localises to the secreted. It is found in the cell wall. Aerial growth, conidiation, and dispersal of filamentous fungi in the environment rely upon a capability of their secreting small amphipathic proteins called hydrophobins (HPBs) with low sequence identity. Class I can self-assemble into an outermost layer of rodlet bundles on aerial cell surfaces, conferring cellular hydrophobicity that supports fungal growth, development and dispersal; whereas Class II form highly ordered films at water-air interfaces through intermolecular interactions but contribute nothing to the rodlet structure. This is Class I hydrophobin 9 from Flammulina velutipes (Agaricus velutipes).